The following is a 925-amino-acid chain: Eukaryotic translation initiation factor 3 subunit A (925 aa).

The interval 108-127 (QAQTDAKEESNKDQAEEDLE) is disordered. Basic and acidic residues predominate over residues 112 to 121 (DAKEESNKDQ). The 175-residue stretch at 324 to 498 (FKFYSSQFVL…DTVSFAQDPF (175 aa)) folds into the PCI domain. Disordered stretches follow at residues 509–544 (PESS…FTRN) and 839–925 (KEAL…AGRG). 2 coiled-coil regions span residues 534–666 (EEQN…MKKL) and 785–885 (SVIA…SSRS). Residues 839–880 (KEALAKEEELAKRRAERERINKERDEIARKQREIEELLEKKN) are compositionally biased toward basic and acidic residues. Over residues 916-925 (RLKRMNAGRG) the composition is skewed to basic residues.

The protein belongs to the eIF-3 subunit A family. As to quaternary structure, component of the eukaryotic translation initiation factor 3 (eIF-3) complex.

It localises to the cytoplasm. Functionally, RNA-binding component of the eukaryotic translation initiation factor 3 (eIF-3) complex, which is involved in protein synthesis of a specialized repertoire of mRNAs and, together with other initiation factors, stimulates binding of mRNA and methionyl-tRNAi to the 40S ribosome. The eIF-3 complex specifically targets and initiates translation of a subset of mRNAs involved in cell proliferation. The protein is Eukaryotic translation initiation factor 3 subunit A of Kluyveromyces lactis (strain ATCC 8585 / CBS 2359 / DSM 70799 / NBRC 1267 / NRRL Y-1140 / WM37) (Yeast).